The following is a 289-amino-acid chain: UPF0276 protein BPP1075 (289 aa).

It belongs to the UPF0276 family.

The polypeptide is UPF0276 protein BPP1075 (Bordetella parapertussis (strain 12822 / ATCC BAA-587 / NCTC 13253)).